The chain runs to 651 residues: Probable potassium transport system protein Kup (651 aa).

12 helical membrane passes run 41–61, 82–102, 130–150, 163–183, 194–214, 235–255, 276–296, 309–329, 366–386, 395–415, 426–446, and 450–470; these read LVLGALGVVYGDIGTSPIYAF, VVSLIFWALTLVVTVKYVLFV, LILGVGICGAALFFGDAVITP, IVAPNLTPFVVPATVVILVTL, VAIVFGPIMALWFVALGASGL, FLTVSPAVAFVTVGAVFLAMT, WLWIVFPCLLLNYFGQAAFIL, MIPSFALWPMVLLATAATVIA, IYIPRVNLLLGLAVVILVLGF, AYGIAVTGNMLVTTVLLYIVM, ALPIILGFLVIDMLFFSANII, and EGGWASIGIATVLVLIMWTWV.

Belongs to the HAK/KUP transporter (TC 2.A.72) family.

The protein resides in the cell inner membrane. The catalysed reaction is K(+)(in) + H(+)(in) = K(+)(out) + H(+)(out). Its function is as follows. Transport of potassium into the cell. Likely operates as a K(+):H(+) symporter. The chain is Probable potassium transport system protein Kup from Brucella suis (strain ATCC 23445 / NCTC 10510).